A 202-amino-acid chain; its full sequence is Large ribosomal subunit protein bL9 (202 aa).

The segment at 177-202 is disordered; sequence AGEFFDPEAEPDDVAEAGGEQTAEEK. The segment covering 181–191 has biased composition (acidic residues); it reads FDPEAEPDDVA.

The protein belongs to the bacterial ribosomal protein bL9 family.

In terms of biological role, binds to the 23S rRNA. In Nitrobacter hamburgensis (strain DSM 10229 / NCIMB 13809 / X14), this protein is Large ribosomal subunit protein bL9.